The chain runs to 602 residues: Elongation factor 4 (602 aa).

The tr-type G domain occupies 7–189 (SRLRNFCIIA…AVVERVPPPK (183 aa)). Residues 19–24 (DHGKST) and 136–139 (NKVD) each bind GTP.

This sequence belongs to the TRAFAC class translation factor GTPase superfamily. Classic translation factor GTPase family. LepA subfamily.

It is found in the cell inner membrane. The enzyme catalyses GTP + H2O = GDP + phosphate + H(+). Required for accurate and efficient protein synthesis under certain stress conditions. May act as a fidelity factor of the translation reaction, by catalyzing a one-codon backward translocation of tRNAs on improperly translocated ribosomes. Back-translocation proceeds from a post-translocation (POST) complex to a pre-translocation (PRE) complex, thus giving elongation factor G a second chance to translocate the tRNAs correctly. Binds to ribosomes in a GTP-dependent manner. The polypeptide is Elongation factor 4 (Prochlorococcus marinus (strain MIT 9211)).